The primary structure comprises 101 residues: RNA silencing suppressor (101 aa).

The tract at residues 47 to 50 is basic; it reads RRRR. Residues 57–78 form a C4-type zinc finger; sequence CPRCARVSPGFYFTTRCDGKTC.

It belongs to the carlaviruses nucleic acid-binding protein family.

Its function is as follows. Suppressor of viral-induced RNA silencing. The potential mechanism of action is based on sequestering siRNAs. The sequence is that of RNA silencing suppressor (TUC) from Dianthus caryophyllus (Carnation).